The primary structure comprises 1452 residues: ABC multidrug transporter A (1452 aa).

Residues M1–E20 form a disordered region. N-linked (GlcNAc...) asparagine glycosylation is found at N2, N10, N228, N287, and N311. In terms of domain architecture, ABC transporter 1 spans L110–D363. 6 helical membrane passes run V474–Y494, A508–L528, M554–F574, G583–F603, V616–P636, and I725–F745. An ABC transporter 2 domain is found at F802–G1044. G838 to T845 contributes to the ATP binding site. 5 helical membrane-spanning segments follow: residues A1153–I1173, I1183–A1203, F1223–F1243, L1271–F1291, and A1297–T1317. N1350, N1365, and N1391 each carry an N-linked (GlcNAc...) asparagine glycan. A helical transmembrane segment spans residues F1418–W1438.

The protein belongs to the ABC transporter superfamily. ABCG family. PDR (TC 3.A.1.205) subfamily.

It is found in the membrane. In terms of biological role, ABC transporter that seems not to be involved in the efflux of toxic substances, at least not the classical compounds such as itraconazole, amphotericin B, voriconazole, posaconazole, ravuconazole, or echinocandins. This chain is ABC multidrug transporter A, found in Aspergillus fumigatus (Neosartorya fumigata).